The primary structure comprises 261 residues: Lipase LipV (261 aa).

The active-site Nucleophile is Ser-87. Catalysis depends on charge relay system residues Asp-217 and His-240.

Belongs to the AB hydrolase superfamily.

The enzyme catalyses a carboxylic ester + H2O = an alcohol + a carboxylate + H(+). It carries out the reaction a tetradecanoate ester + H2O = an aliphatic alcohol + tetradecanoate + H(+). The catalysed reaction is decanoate ester + H2O = decanoate + an aliphatic alcohol + H(+). It catalyses the reaction an octanoate ester + H2O = an aliphatic alcohol + octanoate + H(+). The enzyme catalyses a dodecanoate ester + H2O = an aliphatic alcohol + dodecanoate + H(+). It carries out the reaction a butanoate ester + H2O = an aliphatic alcohol + butanoate + H(+). The catalysed reaction is hexadecanoate ester + H2O = an aliphatic alcohol + hexadecanoate + H(+). It catalyses the reaction octadecanoate ester + H2O = an aliphatic alcohol + octadecanoate + H(+). With respect to regulation, is inhibited by tetrahydrolipstatin, a specific lipase inhibitor and RHC 80267, a diacylglycerol lipase inhibitor, but not by phenylglyoxal and iodoacetate. Lipase that displays broad substrate specificity and preferentially hydrolyzes p-nitrophenyl myristate in vitro. Also shows significant activity with pNP-butyrate (68%), pNP-octanoate (82%), pNP-decanoate (90%), and pNP-laurate (74%). Is probably involved in lipid catabolism. Is active at low pH, and might play some important role in mycobacterial biology in macrophages where the bacteria encounters acidic stress. This Mycobacterium tuberculosis (strain ATCC 25618 / H37Rv) protein is Lipase LipV.